The primary structure comprises 453 residues: MYINPKEILETIQMVRMEHLDIRTVTMGISLRDCSHPDIEVFNENIYEKITTRAKELVRTTNEIQSLYGIPIINKRISVTPIAVAAESCRAPDFVSIAKTMDEAAKDAQVDFIGGFSALVHKGATVGDLKLINSIPEALKSTEKVCSSINVATTKTGINMDAVGLMGSIIKKTADLTADRDGIGCAKLVVFANAPEDNPFMAGAFHGIGEPECVINVGVSGPGVVNAAIRELENPNLTEISETIKKTAFKITRMGEMVGREVSRRLGVEFGILDLSLAPTPAIGDSVAAILEAMGLERCGAHGTTAALALLNDAVKKGGAMASSSVGGLSGAFIPVSEDAGMIEAVRAGALNLEKLEAMTSVCSVGLDMIAVPGDTPASTLSAIIADEMAIGVINRKTTAVRVIPAPGKRVGDSVEFGGLLGNAPIMPLSNFSSETFVKRGGRIPAPIQSLTN.

The protein belongs to the UPF0210 family.

The protein is UPF0210 protein Mbar_A3181 of Methanosarcina barkeri (strain Fusaro / DSM 804).